A 368-amino-acid chain; its full sequence is Guanylate binding protein 128up (368 aa).

Lys-22 bears the (3S)-3-hydroxylysine mark. One can recognise an OBG-type G domain in the interval 65 to 290; sequence ARVGFVGFPS…LLELMWEYLR (226 aa). Residues 71-78, 117-121, and 248-251 contribute to the GTP site; these read GFPSVGKS, DLPGI, and NKID. Residues 290 to 366 form the TGS domain; it reads RLQRIYTKPK…NDEDVVQIVK (77 aa).

This sequence belongs to the TRAFAC class OBG-HflX-like GTPase superfamily. OBG GTPase family. Post-translationally, hydroxylated (with S stereochemistry) at C-3 of Lys-22 by JMJD7. In terms of tissue distribution, expressed in posterior-lateral epidermis of the maxillary lobe.

Functionally, catalyzes the conversion of GTP to GDP through hydrolysis of the gamma-phosphate bond in GTP. Dfd/deformed is required to activate 128up in maxillary segment cells. The protein is Guanylate binding protein 128up of Drosophila melanogaster (Fruit fly).